A 234-amino-acid polypeptide reads, in one-letter code: MEIYEGKAKKMIPLDEDKFIMEFKDDATAFDGVKKAKFVGKGWLNAQISAKLFKLLEDHGIKTHFIGVAGGNRLIVERLEMYPIEVVVRNVVAGSLKKRLPLPEGYELPEPIVELYYKSDELHDPMINYYHARILGISEEEIKEMERIALKVNEILKKFFREKGIILVDFKLEFGKNKKGEIVLADEISPDTCRFWDVETKKSLDKDVFRFDKGDLIEAYKELYKRLIGEEPQI.

It belongs to the SAICAR synthetase family.

The enzyme catalyses 5-amino-1-(5-phospho-D-ribosyl)imidazole-4-carboxylate + L-aspartate + ATP = (2S)-2-[5-amino-1-(5-phospho-beta-D-ribosyl)imidazole-4-carboxamido]succinate + ADP + phosphate + 2 H(+). Its pathway is purine metabolism; IMP biosynthesis via de novo pathway; 5-amino-1-(5-phospho-D-ribosyl)imidazole-4-carboxamide from 5-amino-1-(5-phospho-D-ribosyl)imidazole-4-carboxylate: step 1/2. The sequence is that of Phosphoribosylaminoimidazole-succinocarboxamide synthase from Pyrococcus furiosus (strain ATCC 43587 / DSM 3638 / JCM 8422 / Vc1).